Here is a 73-residue protein sequence, read N- to C-terminus: Putative antitoxin VapB18 (73 aa).

Belongs to the UPF0330 family.

Functionally, possibly the antitoxin component of a type II toxin-antitoxin (TA) system. Its cognate toxin is VapC18 (Potential). The sequence is that of Putative antitoxin VapB18 (vapB18) from Archaeoglobus fulgidus (strain ATCC 49558 / DSM 4304 / JCM 9628 / NBRC 100126 / VC-16).